The primary structure comprises 496 residues: MKMDSAVSEEAFERLTAKLKARVGGEIYSSWFGRLKLDDISKSIVRLSVPTAFLRSWINNHYSELLTELWQEENPQILKVEVVVRGVSRVVRSAAPAETCDNAEAKPAVTPREKMVFPVGQSFGGQSLGEKRGSAVVAESAAATGAVLGSPLDPRYTFDTFVDGASNRVALAAARTIAEAGSSAVRFNPLFIHASVGLGKTHLLQAIAAAALQRQEKARVVYLTAEYFMWRFATAIRDNNALSFKEQLRDIDLLVIDDMQFLQGKSIQHEFCHLLNTLLDSAKQVVVAADRAPSELESLDVRVRSRLQGGVALEVAAPDYEMRLEMLRRRLASAQCEDASLDIGEEILAHVARTVTGSGRELEGAFNQLLFRQSFEPNISIDRVDELLGHLTRAGEPKRIRIEEIQRIVARHYNVSKQDLLSNRRTRTIVKPRQVAMYLAKMMTPRSLPEIGRRFGGRDHTTVLHAVRKIEDLVGADTKLAQELELLKRLINDQAA.

Residues 1–76 (MKMDSAVSEE…TELWQEENPQ (76 aa)) form a domain I, interacts with DnaA modulators region. Residues 76 to 150 (QILKVEVVVR…AAATGAVLGS (75 aa)) are domain II. The interval 151–373 (PLDPRYTFDT…GAFNQLLFRQ (223 aa)) is domain III, AAA+ region. The ATP site is built by Gly-197, Gly-199, Lys-200, and Thr-201. Residues 374–496 (SFEPNISIDR…LKRLINDQAA (123 aa)) form a domain IV, binds dsDNA region.

This sequence belongs to the DnaA family. In terms of assembly, oligomerizes as a right-handed, spiral filament on DNA at oriC.

The protein localises to the cytoplasm. Functionally, plays an essential role in the initiation and regulation of chromosomal replication. ATP-DnaA binds to the origin of replication (oriC) to initiate formation of the DNA replication initiation complex once per cell cycle. Binds the DnaA box (a 9 base pair repeat at the origin) and separates the double-stranded (ds)DNA. Forms a right-handed helical filament on oriC DNA; dsDNA binds to the exterior of the filament while single-stranded (ss)DNA is stabiized in the filament's interior. The ATP-DnaA-oriC complex binds and stabilizes one strand of the AT-rich DNA unwinding element (DUE), permitting loading of DNA polymerase. After initiation quickly degrades to an ADP-DnaA complex that is not apt for DNA replication. Binds acidic phospholipids. In Brucella abortus biovar 1 (strain 9-941), this protein is Chromosomal replication initiator protein DnaA.